The sequence spans 602 residues: Zinc finger protein 652-B (602 aa).

Residues 60 to 232 form a disordered region; sequence FQDSKPTNEV…PSDKAKSEEK (173 aa). Basic and acidic residues predominate over residues 65–79; the sequence is PTNEVHAVKGERENS. Composition is skewed to acidic residues over residues 80–108 and 148–167; these read GESE…DEDE and DDEG…DEEN. Residues 222–232 are compositionally biased toward basic and acidic residues; sequence SPSDKAKSEEK. The segment at 235-258 adopts a C2H2-type 1 zinc-finger fold; sequence LTCDKCPRVFNTRWYLEKHMNVTH. A C2H2-type 2; degenerate zinc finger spans residues 262–284; that stretch reads QICDKCGKKFVLESELSLHLQTD. 6 C2H2-type zinc fingers span residues 289 to 312, 319 to 341, 347 to 369, 375 to 397, 403 to 425, and 431 to 453; these read IQCI…KIVH, FSCE…LVAH, FTCE…SLQH, FRCE…MSIH, FMCQ…MKTH, and FICE…RRTH. The C2H2-type 9; degenerate zinc-finger motif lies at 459-482; it reads YPCDVCGMRFRFSNMLKAHKEKCF. Positions 543-575 are disordered; that stretch reads PFSHLHLHPHSHTHHLAVPPVPHLPPPPALFKS. Positions 545–557 are enriched in basic residues; it reads SHLHLHPHSHTHH. A compositionally biased stretch (pro residues) spans 561–571; that stretch reads PPVPHLPPPPA.

Belongs to the krueppel C2H2-type zinc-finger protein family.

The protein resides in the nucleus. May be involved in transcriptional regulation. The chain is Zinc finger protein 652-B (znf652-b) from Xenopus laevis (African clawed frog).